We begin with the raw amino-acid sequence, 541 residues long: MVGASSSYASPLCTWFVAACMSVSHGGGDSRQAVALQSGGRSRRRRQLSKCSVASGSASIQALVTSCLDFGPCTHYNNNNALSSLFGSNSVSLNRNQRRLNRAASSGGAMAVMEMEKEAAVNKKPPTEQRRVVVTGMGVETSLGHDPHTFYENLLQGNSGISQIENFDCSEFPTRIAGEIKSFSTEGWVAPKLSKRMDKFMLYLLTAGKKALADGGVTDEVMAEFDKTKCGVLIGSAMGGMKVFYDAIEALRISYKKMNPFCVPFATTNMGSAMLAMDLGWMGPNYSISTACATSNFCILNSANHIIKGEADVMLCGGSDAVIIPIGLGGFVACRALSQRNNDPTKASRPWDTNRDGFVMGEGAGVLLLEELEHAKKRGATIYAEFLGGSFTCDAYHMTEPHPDGAGVILCIERALASAGISKEQINYINAHATSTHAGDIKEYQALAHCFGQNPELKVNSTKSMIGHLLGAAGAVEAVATVQAIRTGWVHPNINLENPDSGVDTKLLVGPKKERLDIKAALSNSFGFGGHNSSIIFAPYK.

A chloroplast-targeting transit peptide spans Met-1–Ala-103. Residues Gln-129–Pro-539 enclose the Ketosynthase family 3 (KS3) domain. Catalysis depends on for beta-ketoacyl synthase activity residues Cys-292, His-432, and His-468.

Belongs to the thiolase-like superfamily. Beta-ketoacyl-ACP synthases family. As to quaternary structure, homodimer. As to expression, mostly expressed in siliques, and, to a lower extent, in leaves, stems, flower buds, and flowers.

It localises to the plastid. Its subcellular location is the chloroplast stroma. The catalysed reaction is a fatty acyl-[ACP] + malonyl-[ACP] + H(+) = a 3-oxoacyl-[ACP] + holo-[ACP] + CO2. In terms of biological role, essential protein that catalyzes the condensation reaction of fatty acid synthesis by the addition to an acyl acceptor of two carbons from malonyl-ACP. Specific for elongation from C-16 and C-16 to unsaturated C-18 fatty acids. Confers resistance to low temperatures by maintaining chloroplast membranes integrity. Involved in the regulation of fatty acids ratios during seed metabolism. Required for embryo development, especially at the transition from the globular to the heart stage. The sequence is that of 3-oxoacyl-[acyl-carrier-protein] synthase II, chloroplastic (KAS2) from Arabidopsis thaliana (Mouse-ear cress).